The chain runs to 445 residues: Na(+)-translocating NADH-quinone reductase subunit A (445 aa).

This sequence belongs to the NqrA family. Composed of six subunits; NqrA, NqrB, NqrC, NqrD, NqrE and NqrF.

The enzyme catalyses a ubiquinone + n Na(+)(in) + NADH + H(+) = a ubiquinol + n Na(+)(out) + NAD(+). NQR complex catalyzes the reduction of ubiquinone-1 to ubiquinol by two successive reactions, coupled with the transport of Na(+) ions from the cytoplasm to the periplasm. NqrA to NqrE are probably involved in the second step, the conversion of ubisemiquinone to ubiquinol. The polypeptide is Na(+)-translocating NADH-quinone reductase subunit A (Teredinibacter turnerae (strain ATCC 39867 / T7901)).